The chain runs to 152 residues: SKP1-like protein 11 (152 aa).

The interval 94 to 152 (ILAANYLNIKSLLDLTCQTVADMIKGKTPEEIRSTFNIENDFTPEEEEAVRKENQWAFE) is interaction with the F-box domain of F-box proteins.

The protein belongs to the SKP1 family. Part of a SCF (SKP1-cullin-F-box) protein ligase complex. Interacts with ADO3/FKF1, COI1/FBL2, EBF1/FBL6, PP2A13, PP2B10, UFO, SKIP2, SKIP15, SKIP16, SKIP32, CPR1/CPR30, At1g55000, At1g67340, At1g78100, At3g04660, At3g16740, At3g61590, At4g38940 and At5g49610. Expressed in young seedlings, cotyledons, roots, leaves, floral stems, inflorescences, pollen, and siliques, with a slightly higher level in inflorescence than in other tissues.

Its subcellular location is the nucleus. It functions in the pathway protein modification; protein ubiquitination. Involved in ubiquitination and subsequent proteasomal degradation of target proteins. Together with CUL1, RBX1 and a F-box protein, it forms a SCF E3 ubiquitin ligase complex. The functional specificity of this complex depends on the type of F-box protein. In the SCF complex, it serves as an adapter that links the F-box protein to CUL1. Plays a role during early flowers reproductive development. This chain is SKP1-like protein 11 (ASK11), found in Arabidopsis thaliana (Mouse-ear cress).